A 397-amino-acid chain; its full sequence is Lysosomal acid lipase/cholesteryl ester hydrolase (397 aa).

The signal sequence occupies residues 1 to 25; it reads MQLLGRVICFVVGILLSGGPTGTIS. A propeptide spans 26-72 (removed in mature form); it reads AVDPEANMNVTEIIMHWGYPEHSVQTGDGYILGVHRIPHGRKNQFDK. 3 N-linked (GlcNAc...) asparagine glycosylation sites follow: Asn34, Asn99, and Asn159. Residues 84-378 form the AB hydrolase-1 domain; that stretch reads HGFLADSSNW…EWDHLDFIWG (295 aa). The active-site Charge relay system is the Ser172. 2 N-linked (GlcNAc...) asparagine glycosylation sites follow: Asn271 and Asn319. His372 (charge relay system) is an active-site residue.

The protein belongs to the AB hydrolase superfamily. Lipase family. In terms of assembly, monomer. Glycosylation is not essential for catalytic activity.

It localises to the lysosome. It carries out the reaction a sterol ester + H2O = a sterol + a fatty acid + H(+). The enzyme catalyses cholesteryl (9Z-octadecenoate) + H2O = cholesterol + (9Z)-octadecenoate + H(+). The catalysed reaction is a triacylglycerol + H2O = a 1,2-diacylglycerol + a fatty acid + H(+). It catalyses the reaction 1,2-di-(9Z-octadecenoyl)-glycerol + (9Z)-octadecenoate + H(+) = 1,2,3-tri-(9Z-octadecenoyl)-glycerol + H2O. It carries out the reaction a 1,2-diacylglycerol + H2O = a 1-acylglycerol + a fatty acid + H(+). The enzyme catalyses 1,2-di-(9Z-octadecenoyl)-glycerol + H2O = 1-(9Z-octadecenoyl)-glycerol + (9Z)-octadecenoate + H(+). The catalysed reaction is a 1,3-diacylglycerol + H2O = a 1-acylglycerol + a fatty acid + H(+). It catalyses the reaction 1,3-di-(9Z-octadecenoyl)-glycerol + H2O = 1-(9Z-octadecenoyl)-glycerol + (9Z)-octadecenoate + H(+). Catalyzes the deacylation of cholesteryl ester core lipids of endocytosed low density lipoproteins to generate free fatty acids and cholesterol. Hydrolyzes triglycerides (1,2,3-triacylglycerol) and diglycerides (such as 1,2-diacylglycerol and 1,3-diacylglycerol) with preference for the acyl moieties at the sn-1 or sn-3 positions. The sequence is that of Lysosomal acid lipase/cholesteryl ester hydrolase (Lipa) from Rattus norvegicus (Rat).